Reading from the N-terminus, the 3999-residue chain is Hybrid PKS-NRPS synthetase xenE (3999 aa).

The 437-residue stretch at 13 to 449 (REPIAVVGSG…GTNAHCIIEN (437 aa)) folds into the Ketosynthase family 3 (KS3) domain. Catalysis depends on for beta-ketoacyl synthase activity residues C186, H325, and H369. The Malonyl-CoA:ACP transacylase (MAT) domain maps to 562–879 (VFTGQGAQWP…TGLLNRGKDD (318 aa)). Residues 949–1084 (NPLLGSRTTD…GRVIVITGET (136 aa)) form an N-terminal hotdog fold region. The PKS/mFAS DH domain maps to 949–1253 (NPLLGSRTTD…VVAFAEQTED (305 aa)). Residues 950 to 1252 (PLLGSRTTDV…RVVAFAEQTE (303 aa)) form a dehydratase (DH) domain region. The active-site Proton acceptor; for dehydratase activity is the H981. The tract at residues 1099 to 1253 (LVDIPEDRFY…VVAFAEQTED (155 aa)) is C-terminal hotdog fold. D1159 (proton donor; for dehydratase activity) is an active-site residue. Residues 1298-1593 (YMKQLVTLFP…FSGADSPMPE (296 aa)) are methyltransferase (cMeT) domain. The region spanning 2133–2306 (TYVLFGLTSD…AASILHLGAV (174 aa)) is the Ketoreductase (KR) domain. The Carrier 1 domain occupies 2414-2495 (EEILEIVQDA…QLVEYAIGSM (82 aa)). Residue S2455 is modified to O-(pantetheine 4'-phosphoryl)serine. A disordered region spans residues 2501-2573 (PNRADSAKAS…EESPSESVND (73 aa)). A compositionally biased stretch (low complexity) spans 2526 to 2554 (SVSSSPSSLPKTSASGSSQQMSEGSSKTS). A condensation region spans residues 2580 to 3015 (EKVLPVSPGQ…EEVSLFTEQE (436 aa)). Positions 3045–3453 (AVHTDKVALK…RIEGDTQIKL (409 aa)) are adenylation. In terms of domain architecture, Carrier 2 spans 3562-3642 (RKLTDTESKL…AMAAAIQDTS (81 aa)). An O-(pantetheine 4'-phosphoryl)serine modification is found at S3602. Residues 3681–3900 (LTGATGFLGK…IDLITVEKAA (220 aa)) form a reductase-like (R) domain (R) region.

The protein in the C-terminal section; belongs to the NRP synthetase family.

The protein operates within mycotoxin biosynthesis. Its function is as follows. Hybrid PKS-NRPS synthetase; part of the gene cluster that mediates the biosynthesis of xenoacremones such as xenoacremone A, a compound that shows inhibitory activity toward the PI3K/AKT signaling pathway and which has the ability to induce apoptosis of A549 lung cancer cells. Within the pathway, cooperation of the hybrid PKS-NRPS xenE and the trans-acting enoyl reductase xenG is responsible for the formation of the reduced tyrosine-nonaketide derivative. The PKS module of xenE acted in combination with the trans-acting enoyl reductase xenG to produce a double-methylated nonaketide attached to the ACP domain. In parallel, the adenylation (A) domain of the NRPS module activated L-tyrosine, which was then transferred to the ACP domain. The condensation (C) domain subsequently linked this group to the polyketide chain, forming an enzyme-bound amide. Reductive release by the C-terminal R domain afforded the aldehyde derivative. The alpha/beta hydrolase xenA then accelerates intramolecular nucleophilic attack to give a pyrrolidone derivative. Subsequently, three enzymes, xenF, xenD, and xenC, coordinately participate in the conversion to xenoacremone B. XenF catalyzes sigmatropic rearrangement to form an A-ring, which leads to an unusual intermediate with a hexane ring, which is required for the formation of the tricarbocyclic product. Epoxidation catalyzed by xenD and the formation of the paracyclophane ether catalyzed by xenC initiate a spontaneous intramolecular Diels-Alder (IMDA) reaction to yield xenoacremone B. Spontaneous hydration of xenoacremone B leads to the formation of xenoacremone A, which undergoes subsequent methylation to afford xenoacremone C. This chain is Hybrid PKS-NRPS synthetase xenE, found in Xenoacremonium sinensis (Endophyte fungus).